The chain runs to 461 residues: Ribosomal protein uS12 methylthiotransferase RimO (461 aa).

The 116-residue stretch at 13–128 (PKVGFVSLGC…VMQHVHTHLP (116 aa)) folds into the MTTase N-terminal domain. The [4Fe-4S] cluster site is built by Cys-22, Cys-58, Cys-87, Cys-159, Cys-163, and Cys-166. The Radical SAM core domain occupies 145-390 (LTPRHYAYLK…MEVAEEVSAK (246 aa)). Residues 393-461 (AKKVGKTLKV…ADGHDLWGEV (69 aa)) form the TRAM domain.

This sequence belongs to the methylthiotransferase family. RimO subfamily. It depends on [4Fe-4S] cluster as a cofactor.

It is found in the cytoplasm. The catalysed reaction is L-aspartate(89)-[ribosomal protein uS12]-hydrogen + (sulfur carrier)-SH + AH2 + 2 S-adenosyl-L-methionine = 3-methylsulfanyl-L-aspartate(89)-[ribosomal protein uS12]-hydrogen + (sulfur carrier)-H + 5'-deoxyadenosine + L-methionine + A + S-adenosyl-L-homocysteine + 2 H(+). Catalyzes the methylthiolation of an aspartic acid residue of ribosomal protein uS12. This chain is Ribosomal protein uS12 methylthiotransferase RimO, found in Paraburkholderia phytofirmans (strain DSM 17436 / LMG 22146 / PsJN) (Burkholderia phytofirmans).